A 160-amino-acid chain; its full sequence is Cathelin-related peptide SC5 (160 aa).

The N-terminal stretch at 1–29 (METQRASLSLGRRSLWLLLLGLVLASASA) is a signal peptide. Positions 30-131 (QALSYREAVL…DITCAEPQSV (102 aa)) are excised as a propeptide. Intrachain disulfides connect Cys-86-Cys-97 and Cys-108-Cys-125.

This sequence belongs to the cathelicidin family.

The protein localises to the secreted. In terms of biological role, broad spectrum bactericidal agent. This Ovis aries (Sheep) protein is Cathelin-related peptide SC5.